The chain runs to 155 residues: Small ribosomal subunit protein uS7cz/uS7cy (155 aa).

Belongs to the universal ribosomal protein uS7 family. In terms of assembly, part of the 30S ribosomal subunit.

It is found in the plastid. One of the primary rRNA binding proteins, it binds directly to 16S rRNA where it nucleates assembly of the head domain of the 30S subunit. In Cuscuta obtusiflora (Peruvian dodder), this protein is Small ribosomal subunit protein uS7cz/uS7cy (rps7-A).